The primary structure comprises 111 residues: ATP-dependent Clp protease adapter protein ClpS (111 aa).

Belongs to the ClpS family. Binds to the N-terminal domain of the chaperone ClpA.

Functionally, involved in the modulation of the specificity of the ClpAP-mediated ATP-dependent protein degradation. This chain is ATP-dependent Clp protease adapter protein ClpS, found in Leptospira interrogans serogroup Icterohaemorrhagiae serovar copenhageni (strain Fiocruz L1-130).